We begin with the raw amino-acid sequence, 334 residues long: GTPase Obg (334 aa).

The region spanning 1–159 (MKFIDQAIIH…RDIQLELMLL (159 aa)) is the Obg domain. The tract at residues 67 to 86 (AQNGQNGSSRKSSGKKGDDI) is disordered. Residues 68–77 (QNGQNGSSRK) show a composition bias toward low complexity. Residues 160 to 333 (ADVGTLGMPN…LCSDITKYLK (174 aa)) enclose the OBG-type G domain. GTP is bound by residues 166-173 (GMPNVGKS), 191-195 (FTTLH), 213-216 (DIPG), 283-286 (NKID), and 314-316 (SSM). 2 residues coordinate Mg(2+): Ser-173 and Thr-193.

It belongs to the TRAFAC class OBG-HflX-like GTPase superfamily. OBG GTPase family. Monomer. Mg(2+) is required as a cofactor.

It is found in the cytoplasm. An essential GTPase which binds GTP, GDP and possibly (p)ppGpp with moderate affinity, with high nucleotide exchange rates and a fairly low GTP hydrolysis rate. Plays a role in control of the cell cycle, stress response, ribosome biogenesis and in those bacteria that undergo differentiation, in morphogenesis control. The chain is GTPase Obg from Buchnera aphidicola subsp. Acyrthosiphon pisum (strain 5A).